The chain runs to 372 residues: NAD(P)H-quinone oxidoreductase subunit 1 (372 aa).

A run of 8 helical transmembrane segments spans residues 27–47, 97–117, 128–148, 176–196, 204–224, 266–286, 308–328, and 347–367; these read IIWL…GVLV, ILFT…WLIV, VGIG…GLLM, LALS…IDIV, ILSW…ICAL, ILSA…PIPV, SIGI…AILL, and FLLP…LAFP.

Belongs to the complex I subunit 1 family. NDH-1 is composed of at least 11 different subunits.

It is found in the cellular thylakoid membrane. The catalysed reaction is a plastoquinone + NADH + (n+1) H(+)(in) = a plastoquinol + NAD(+) + n H(+)(out). It catalyses the reaction a plastoquinone + NADPH + (n+1) H(+)(in) = a plastoquinol + NADP(+) + n H(+)(out). Its function is as follows. NDH-1 shuttles electrons from an unknown electron donor, via FMN and iron-sulfur (Fe-S) centers, to quinones in the respiratory and/or the photosynthetic chain. The immediate electron acceptor for the enzyme in this species is believed to be plastoquinone. Couples the redox reaction to proton translocation, and thus conserves the redox energy in a proton gradient. The protein is NAD(P)H-quinone oxidoreductase subunit 1 of Prochlorococcus marinus subsp. pastoris (strain CCMP1986 / NIES-2087 / MED4).